A 602-amino-acid polypeptide reads, in one-letter code: Serine/threonine-protein phosphatase 2A 56 kDa regulatory subunit delta isoform (602 aa).

Basic and acidic residues predominate over residues 1-13; that stretch reads MPYKLKKEKEPPK. Residues 1–96 are disordered; that stretch reads MPYKLKKEKE…QSSSRFNLSK (96 aa). Repeat copies occupy residues 37–38, 39–40, 41–42, 43–44, and 45–46. Positions 37-52 are 8 X 2 AA approximate tandem repeats of Q-P; sequence QPQPQPQPQPQAQSQP. A compositionally biased stretch (low complexity) spans 46 to 55; the sequence is PQAQSQPPSS. Residues 47–48 form a 6; approximate repeat; it reads QA. The stretch at 49 to 50 is one 7; approximate repeat; it reads QS. Repeat 8 spans residues 51–52; that stretch reads QP. The residue at position 63 (threonine 63) is a Phosphothreonine. Residues serine 88, serine 89, and serine 90 each carry the phosphoserine modification. The short motif at 523-530 is the SH3-binding; class I element; it reads RAPPPLPP. The Nuclear localization signal motif lies at 548 to 565; sequence KRTVETEAVQMLKDIKKE. 2 positions are modified to phosphoserine: serine 573 and serine 598.

It belongs to the phosphatase 2A regulatory subunit B56 family. As to quaternary structure, PP2A consists of a common heterodimeric core enzyme, composed of a 36 kDa catalytic subunit (subunit C) and a 65 kDa constant regulatory subunit (PR65 or subunit A), that associates with a variety of regulatory subunits. Proteins that associate with the core dimer include three families of regulatory subunits B (the R2/B/PR55/B55, R3/B''/PR72/PR130/PR59 and R5/B'/B56 families), the 48 kDa variable regulatory subunit, viral proteins, and cell signaling molecules. Interacts with the PP2A A subunit PPP2R1A. Interacts with SGO1. Interacts with ADCY8. In terms of tissue distribution, isoform Delta-2 is widely expressed. Isoform Delta-1 is highly expressed in brain.

The protein localises to the cytoplasm. The protein resides in the nucleus. Functionally, the B regulatory subunit might modulate substrate selectivity and catalytic activity, and might also direct the localization of the catalytic enzyme to a particular subcellular compartment. This chain is Serine/threonine-protein phosphatase 2A 56 kDa regulatory subunit delta isoform (PPP2R5D), found in Homo sapiens (Human).